Here is a 304-residue protein sequence, read N- to C-terminus: Recombination-associated protein RdgC (304 aa).

This sequence belongs to the RdgC family.

The protein localises to the cytoplasm. It localises to the nucleoid. Its function is as follows. May be involved in recombination. The chain is Recombination-associated protein RdgC from Shewanella baltica (strain OS223).